We begin with the raw amino-acid sequence, 75 residues long: UPF0352 protein VIBHAR_03027 (75 aa).

The protein belongs to the UPF0352 family.

The sequence is that of UPF0352 protein VIBHAR_03027 from Vibrio campbellii (strain ATCC BAA-1116).